The chain runs to 45 residues: Large ribosomal subunit protein bL34 (45 aa).

Residues 1-45 form a disordered region; it reads MTKRTFQPNNRRRARKHGFRARMRTRAGRAILSARRGKNRAELSA. Over residues 10–27 the composition is skewed to basic residues; sequence NRRRARKHGFRARMRTRA.

Belongs to the bacterial ribosomal protein bL34 family.

This chain is Large ribosomal subunit protein bL34, found in Micrococcus luteus (strain ATCC 4698 / DSM 20030 / JCM 1464 / CCM 169 / CCUG 5858 / IAM 1056 / NBRC 3333 / NCIMB 9278 / NCTC 2665 / VKM Ac-2230) (Micrococcus lysodeikticus).